The following is a 95-amino-acid chain: 6 kDa early secretory antigenic target homolog (95 aa).

Belongs to the WXG100 family. ESAT-6 subfamily. As to quaternary structure, forms a tight 1:1 complex with EsxB.

The protein resides in the secreted. In terms of biological role, a secreted protein that might play a role in virulence. This is 6 kDa early secretory antigenic target homolog (esxA) from Mycobacterium leprae (strain TN).